A 310-amino-acid chain; its full sequence is Cysteine synthase (310 aa).

Lysine 44 bears the N6-(pyridoxal phosphate)lysine mark. Pyridoxal 5'-phosphate-binding positions include asparagine 74, 179–183 (GTGGT), and serine 267.

It belongs to the cysteine synthase/cystathionine beta-synthase family. Pyridoxal 5'-phosphate is required as a cofactor.

It carries out the reaction O-acetyl-L-serine + hydrogen sulfide = L-cysteine + acetate. The protein operates within amino-acid biosynthesis; L-cysteine biosynthesis; L-cysteine from L-serine: step 2/2. The polypeptide is Cysteine synthase (cysK) (Neisseria meningitidis serogroup B (strain ATCC BAA-335 / MC58)).